A 74-amino-acid polypeptide reads, in one-letter code: ATP synthase subunit 9, mitochondrial (74 aa).

Helical transmembrane passes span 8–28 (IGAG…GNVF) and 45–72 (LFGY…LILF).

It belongs to the ATPase C chain family. As to quaternary structure, F-type ATPases have 2 components, CF(1) - the catalytic core - and CF(0) - the membrane proton channel. CF(1) has five subunits: alpha(3), beta(3), gamma(1), delta(1), epsilon(1). CF(0) has three main subunits: a, b and c.

Its subcellular location is the mitochondrion membrane. In terms of biological role, this protein is one of the chains of the nonenzymatic membrane component (F0) of mitochondrial ATPase. The protein is ATP synthase subunit 9, mitochondrial (ATP9) of Pisum sativum (Garden pea).